We begin with the raw amino-acid sequence, 1139 residues long: MNFCDNNEMNETKNFMMSNKNDDIVVDCDEYIDGNVFEKNTNMGNIYDENYNVDMKNDNLLSKLNDNISFTYTTNGQVEKQENEIKEKQNILHYQIYIDNDEDKYKYCSNSNLHKNEEEHEKGSPNNIYEELDNNLEKKYFYYNSDSKHCIDEKNETNDLENENVVTSMDVSYENVLNDNFIKSRSTSINYTDNSFVLNKENLKSSHHINGYYINDHDNIKSDIINDHDNIKSDIINDYDNIKGDKINEYDNIKSDKINDYDNIKSDIINDYDNIKSDKINDYDNIKSDKINDYDNIKSDKINDYDNIKSDKINDYDNIKSDKINHYDNIKSDKINDYDNIKSDKINDYDNIKSDKINDYDNIKYNDDSQINNNVSNKVNSPDDDPNTYEKDKKDIINCNIYEENKNNMNNIIHNDKENIHMVDTGKNEENNNIDNKNNDDINKVNVLTRVDTENYILNEENILPLHTNDDVTKLLDEINDLKNTIENMKKEKINLLSKFKAYTLNNKKELEELKIKCKNKEEQIKMYENKLQNKEDEIMNYVNEIQNKDKKIESYHIKLHNKEEEIMNYVNEIQNKEEEIIKYVNELQNSDVQKEKKELKTINEVLKNTNEKLEKEITSLLGEMKKIEEENKVLKIFKEEKNKINNEKVTQIKGDDINDDNDMKFKQILLDNKTFNKLLVNELNIVEENILFCFSIDKDKNRLLVCIKQNDDNFFVIPNCIFDEKFPGLQKKTESMIIQDIHEKEILELKNKQMNELYILKKEKEDIYKEYEEYKKKVTSLINETNYNYKNIEEKENEIKELNNTLNKYKEEMNNYKEEIIVINEKYKLLEIELCKEKNIRDQQNVGISDLKKKMLKEKIELEKKYKEQYEKETQQKINDMKIIFDNKEKILQDQIDDLLHKIEKLTFSNDEKTKTIENLQIYMDNDDNIMNQEGIQKNEKKQIIDNPINTDEKDLLNYIPDNHINSDLNHINSNVENDYVEKRNKNNVHLSKKETNYQHNINEQENDNNNNNNNNNNNNNVEKLKSINSTNTSIPIYPYEYKKIRKKLETYEILLNEQQEGKKKMTEEINSLKNQVKNYESINGNYQHIIYQKNILSNFIAQIPSRIQVDDYVSVIFNSFNFSNQEIEAINIKRSKK.

Positions 366–388 (NDDSQINNNVSNKVNSPDDDPNT) are disordered. Positions 369 to 380 (SQINNNVSNKVN) are enriched in polar residues. Coiled-coil stretches lie at residues 472 to 648 (VTKL…INNE) and 758 to 877 (LYIL…ETQQ). The disordered stretch occupies residues 1004 to 1024 (NEQENDNNNNNNNNNNNNNVE). Residues 1009-1022 (DNNNNNNNNNNNNN) are compositionally biased toward low complexity. Residues 1043–1084 (YKKIRKKLETYEILLNEQQEGKKKMTEEINSLKNQVKNYESI) adopt a coiled-coil conformation. Positions 1084–1135 (INGNYQHIIYQKNILSNFIAQIPSRIQVDDYVSVIFNSFNFSNQEIEAINIK) constitute a GRIP domain.

This is GRIP and coiled-coil domain-containing protein from Plasmodium falciparum (isolate 3D7).